A 167-amino-acid polypeptide reads, in one-letter code: Signal peptidase complex subunit 2 (167 aa).

Over 1 to 36 (MPKYNVSDFKSKFDKELTNHFNKNGYKQSFVFEDIR) the chain is Cytoplasmic. The helical transmembrane segment at 37 to 57 (LLIAIACIIPAGLAFGIEYVY) threads the bilayer. Residues 58–68 (GFGVLKSYLKY) are Lumenal-facing. The chain crosses the membrane as a helical span at residues 69-89 (LLPLYFLASCLLTFWSSVVKG). The Cytoplasmic portion of the chain corresponds to 90 to 167 (STVYVATKKE…ISKYLSQIEN (78 aa)).

This sequence belongs to the SPCS2 family. Component of the signal peptidase complex (SPC) composed of a catalytic subunit sec11 and three accessory subunits spc1, spc2 and spc3. The complex induces a local thinning of the ER membrane which is used to measure the length of the signal peptide (SP) h-region of protein substrates. This ensures the selectivity of the complex towards h-regions shorter than 18-20 amino acids. SPC associates with the translocon complex.

Its subcellular location is the endoplasmic reticulum membrane. Its function is as follows. Component of the signal peptidase complex (SPC) which catalyzes the cleavage of N-terminal signal sequences from nascent proteins as they are translocated into the lumen of the endoplasmic reticulum. Enhances the enzymatic activity of SPC and facilitates the interactions between different components of the translocation site. This chain is Signal peptidase complex subunit 2 (spc2), found in Schizosaccharomyces pombe (strain 972 / ATCC 24843) (Fission yeast).